A 94-amino-acid chain; its full sequence is Co-chaperonin GroES (94 aa).

It belongs to the GroES chaperonin family. In terms of assembly, heptamer of 7 subunits arranged in a ring. Interacts with the chaperonin GroEL.

The protein resides in the cytoplasm. In terms of biological role, together with the chaperonin GroEL, plays an essential role in assisting protein folding. The GroEL-GroES system forms a nano-cage that allows encapsulation of the non-native substrate proteins and provides a physical environment optimized to promote and accelerate protein folding. GroES binds to the apical surface of the GroEL ring, thereby capping the opening of the GroEL channel. In Streptococcus mitis, this protein is Co-chaperonin GroES.